The sequence spans 131 residues: Large ribosomal subunit protein bL12 (131 aa).

The span at 99 to 125 shows a compositional bias: basic and acidic residues; it reads ESTPKPIKEGTNKDDAEETKKKLEEAG. The segment at 99–131 is disordered; that stretch reads ESTPKPIKEGTNKDDAEETKKKLEEAGAKVTVK.

Belongs to the bacterial ribosomal protein bL12 family. As to quaternary structure, homodimer. Part of the ribosomal stalk of the 50S ribosomal subunit. Forms a multimeric L10(L12)X complex, where L10 forms an elongated spine to which 2 to 4 L12 dimers bind in a sequential fashion. Binds GTP-bound translation factors.

In terms of biological role, forms part of the ribosomal stalk which helps the ribosome interact with GTP-bound translation factors. Is thus essential for accurate translation. The chain is Large ribosomal subunit protein bL12 from Gloeothece citriformis (strain PCC 7424) (Cyanothece sp. (strain PCC 7424)).